Consider the following 72-residue polypeptide: Translation initiation factor IF-1 (72 aa).

The S1-like domain maps to 1 to 72 (MAKQSAIEQD…SKGRIVFRYK (72 aa)).

The protein belongs to the IF-1 family. In terms of assembly, component of the 30S ribosomal translation pre-initiation complex which assembles on the 30S ribosome in the order IF-2 and IF-3, IF-1 and N-formylmethionyl-tRNA(fMet); mRNA recruitment can occur at any time during PIC assembly.

Its subcellular location is the cytoplasm. In terms of biological role, one of the essential components for the initiation of protein synthesis. Stabilizes the binding of IF-2 and IF-3 on the 30S subunit to which N-formylmethionyl-tRNA(fMet) subsequently binds. Helps modulate mRNA selection, yielding the 30S pre-initiation complex (PIC). Upon addition of the 50S ribosomal subunit IF-1, IF-2 and IF-3 are released leaving the mature 70S translation initiation complex. The protein is Translation initiation factor IF-1 of Bacteroides fragilis (strain ATCC 25285 / DSM 2151 / CCUG 4856 / JCM 11019 / LMG 10263 / NCTC 9343 / Onslow / VPI 2553 / EN-2).